Here is a 689-residue protein sequence, read N- to C-terminus: Glycine--tRNA ligase beta subunit (689 aa).

It belongs to the class-II aminoacyl-tRNA synthetase family. In terms of assembly, tetramer of two alpha and two beta subunits.

It localises to the cytoplasm. It carries out the reaction tRNA(Gly) + glycine + ATP = glycyl-tRNA(Gly) + AMP + diphosphate. The chain is Glycine--tRNA ligase beta subunit from Lacticaseibacillus paracasei (strain ATCC 334 / BCRC 17002 / CCUG 31169 / CIP 107868 / KCTC 3260 / NRRL B-441) (Lactobacillus paracasei).